Here is a 130-residue protein sequence, read N- to C-terminus: Large ribosomal subunit protein bL20 (130 aa).

This sequence belongs to the bacterial ribosomal protein bL20 family.

Its function is as follows. Binds directly to 23S ribosomal RNA and is necessary for the in vitro assembly process of the 50S ribosomal subunit. It is not involved in the protein synthesizing functions of that subunit. This chain is Large ribosomal subunit protein bL20, found in Clavibacter michiganensis subsp. michiganensis (strain NCPPB 382).